The following is a 131-amino-acid chain: Fimbrial assembly protein, serogroups C1 and C2 (131 aa).

This chain is Fimbrial assembly protein, serogroups C1 and C2 (fimB), found in Dichelobacter nodosus (Bacteroides nodosus).